A 483-amino-acid chain; its full sequence is Pre-glycoprotein polyprotein GP complex (483 aa).

Gly2 carries N-myristoyl glycine; by host lipidation. The Extracellular portion of the chain corresponds to 2-17 (GQFISFMQEIPIFLQE). The chain crosses the membrane as a helical span at residues 18–32 (ALNIALVAVSLICIV). A topological domain (cytoplasmic) is located at residue Lys33. A helical membrane pass occupies residues 34–53 (GLVNLYRCGLFQLMVFLVLA). Extracellular segments follow at residues 54–58 (GRSCS) and 59–422 (EETF…TLVD). Cys57 serves as a coordination point for Zn(2+). N-linked (GlcNAc...) asparagine; by host glycans are attached at residues Asn83 and Asn95. Intrachain disulfides connect Cys92/Cys224, Cys134/Cys162, Cys205/Cys211, Cys269/Cys282, Cys291/Cys300, and Cys354/Cys375. Asn164 and Asn176 each carry an N-linked (GlcNAc...) asparagine; by host glycan. N-linked (GlcNAc...) asparagine; by host glycosylation is found at Asn355, Asn363, Asn380, and Asn385. The helical transmembrane segment at 423-443 (ICFWSTVFFTSTLFLHLIGFP) threads the bilayer. Over 444 to 483 (THEHIRGEGCPLPHRLNSMGGCRCGKYLPLKKPTIWHRRH) the chain is Cytoplasmic. The Zn(2+) site is built by His445, His447, Cys453, His457, Cys465, Cys467, and His483.

Belongs to the arenaviridae GPC protein family. In terms of assembly, homotetramer; disulfide-linked. Homotetramer. GP2 homotetramers bind through ionic interactions with GP1 homotetramers to form the GP complex together with the stable signal peptide. The GP-C polyprotein interacts with the host protease MBTPS1/SKI-1 resulting in the polyprotein processing. In terms of processing, specific enzymatic cleavages in vivo yield mature proteins. GP-C polyprotein is cleaved in the endoplasmic reticulum by the host protease MBTPS1. Only cleaved glycoprotein is incorporated into virions. The SSP remains stably associated with the GP complex following cleavage by signal peptidase and plays crucial roles in the trafficking of GP through the secretory pathway. Post-translationally, myristoylation is necessary for GP2-mediated fusion activity.

The protein localises to the virion membrane. The protein resides in the host endoplasmic reticulum membrane. It localises to the host Golgi apparatus membrane. Its subcellular location is the host cell membrane. In terms of biological role, class I viral fusion protein that directs fusion of viral and host endosomal membranes, leading to delivery of the nucleocapsid into the cytoplasm. Membrane fusion is mediated by irreversible conformational changes induced upon acidification in the endosome. Functionally, stable signal peptide (SSP): cleaved and functions as a signal peptide. In addition, it is also retained as the third component of the GP complex. The SSP is required for efficient glycoprotein expression, post-translational maturation cleavage of GP1 and GP2, glycoprotein transport to the cell surface plasma membrane, formation of infectious virus particles, and acid pH-dependent glycoprotein-mediated cell fusion. Interacts with the host receptor. In Tacaribe virus (strain V5) (TCRV), this protein is Pre-glycoprotein polyprotein GP complex.